The sequence spans 436 residues: UPF0597 protein YhaM (436 aa).

Belongs to the UPF0597 family.

The polypeptide is UPF0597 protein YhaM (Shigella flexneri serotype 5b (strain 8401)).